Reading from the N-terminus, the 244-residue chain is Uridylate kinase (244 aa).

An ATP-binding site is contributed by Lys-11–Gly-14. Residues Gly-19 to Gly-24 are involved in allosteric activation by GTP. Position 53 (Gly-53) interacts with UMP. Residues Gly-54 and Arg-58 each contribute to the ATP site. UMP-binding positions include Asp-73 and Ser-134 to Thr-141. ATP is bound by residues Thr-161, Tyr-167, and Asp-170.

It belongs to the UMP kinase family. As to quaternary structure, homohexamer.

It is found in the cytoplasm. The enzyme catalyses UMP + ATP = UDP + ADP. It functions in the pathway pyrimidine metabolism; CTP biosynthesis via de novo pathway; UDP from UMP (UMPK route): step 1/1. With respect to regulation, allosterically activated by GTP. Inhibited by UTP. Functionally, catalyzes the reversible phosphorylation of UMP to UDP. The protein is Uridylate kinase of Trichodesmium erythraeum (strain IMS101).